Reading from the N-terminus, the 696-residue chain is Ribonucleoside-diphosphate reductase subunit beta (696 aa).

The Fe cation site is built by Asp97, Glu127, and His130. Tyr134 is a catalytic residue. Fe cation-binding residues include Glu194 and Glu228. The DOD-type homing endonuclease domain occupies 377–507 (DGTIDSKRNG…FVQALCALGG (131 aa)). His577 contributes to the Fe cation binding site.

The protein belongs to the ribonucleoside diphosphate reductase small chain family. As to quaternary structure, tetramer of two alpha and two beta subunits. Fe cation is required as a cofactor. Post-translationally, this protein undergoes a protein self splicing that involves a post-translational excision of the intervening region (intein) followed by peptide ligation.

The enzyme catalyses a 2'-deoxyribonucleoside 5'-diphosphate + [thioredoxin]-disulfide + H2O = a ribonucleoside 5'-diphosphate + [thioredoxin]-dithiol. Its function is as follows. Provides the precursors necessary for DNA synthesis. Catalyzes the biosynthesis of deoxyribonucleotides from the corresponding ribonucleotides. The sequence is that of Ribonucleoside-diphosphate reductase subunit beta (nrdB) from Aquifex aeolicus (strain VF5).